A 398-amino-acid polypeptide reads, in one-letter code: MTFVETVAVPDNEERPSAGHNRPVADSTKCPNAREMKVQNRVAQRTHHRRLKTKLEVLRERLKEPEKQVGEPARVQTSTSTLVSDAATSLADSMCLVPAVQNDQAMAFDFLMTPSPSVGNDCPSNDLETMRQAASVHSNTLGGAFPLNRSPCTENMTPESQVSLSTAPLCFTSVVPAELDMDAFCTLDSSDWSRPNEESLLRLANYSTSVSPTNVQWGVDENAPLQDRVRYMRDQAVAMGFGSLDDVVEAHYTQKLECTSPSFQEQRLSRNRRLSRLLSTLHNAAKDWSEWERRGLQEQVTQGAEDILVSELNSYITQRSMNSTDDKIITGGLLDEQSRLRQDVEERRRLQDSLPNLGALLTTLLSRSNAPNQDARRDTVLAMIKTMCFDQDENMSIS.

A disordered region spans residues 1–28; the sequence is MTFVETVAVPDNEERPSAGHNRPVADST. A bZIP domain is found at 31-62; it reads PNAREMKVQNRVAQRTHHRRLKTKLEVLRERL. The segment at 34-50 is basic motif; that stretch reads REMKVQNRVAQRTHHRR. The leucine-zipper stretch occupies residues 51-58; that stretch reads LKTKLEVL.

This sequence belongs to the bZIP family.

The protein localises to the nucleus. The protein operates within secondary metabolite biosynthesis. In terms of biological role, transcription factor; part of the gene cluster that mediates the biosynthesis of KK-1, a novel cyclic depsipeptide with 10 residues which is a promising active compound with high activity against many plant pathogens, especially Botrytis cinerea. Positively regulates the expression of all the genes from the KK-1 biosynthesis gene cluster. The sequence is that of Transcription factor kk1f from Curvularia clavata.